The chain runs to 552 residues: Membrane protein insertase YidC (552 aa).

Residues 6–26 (NLLLAAIAAVILMLFIRWNHF) traverse the membrane as a helical segment. 2 stretches are compositionally biased toward polar residues: residues 32-41 (QHQAGNTPAG) and 60-70 (PTASDTPQATA). Positions 32–70 (QHQAGNTPAGSSIAAIAPDSNGDIPSAVPTASDTPQATA) are disordered. A run of 4 helical transmembrane segments spans residues 365–387 (WGLAIIGLTLSVKLLFFPLSAAS), 431–451 (FGGCLPLLIQMPVFIALYWVL), 472–492 (MDPYFVLPIIYGATMWIMQKL), and 508–528 (LPFVFTFMFLWFPAGLVLYWV).

This sequence belongs to the OXA1/ALB3/YidC family. Type 1 subfamily. In terms of assembly, interacts with the Sec translocase complex via SecD. Specifically interacts with transmembrane segments of nascent integral membrane proteins during membrane integration.

It is found in the cell inner membrane. Required for the insertion and/or proper folding and/or complex formation of integral membrane proteins into the membrane. Involved in integration of membrane proteins that insert both dependently and independently of the Sec translocase complex, as well as at least some lipoproteins. Aids folding of multispanning membrane proteins. The chain is Membrane protein insertase YidC from Cellvibrio japonicus (strain Ueda107) (Pseudomonas fluorescens subsp. cellulosa).